Consider the following 122-residue polypeptide: MLAVRAWGRTYNTLVQRKLNAACPTGALPAVTLRPLHCSLVARSPEQSLKDSKTFDPTLLQFLVCPLSRKSLRYEESTNELINDELGIAYPIVDGIPNMIPQDARMIHKDRKPESPDTEQTT.

The transit peptide at 1-40 directs the protein to the mitochondrion; it reads MLAVRAWGRTYNTLVQRKLNAACPTGALPAVTLRPLHCSL. A TRM112 domain is found at 56-102; the sequence is DPTLLQFLVCPLSRKSLRYEESTNELINDELGIAYPIVDGIPNMIPQ.

The protein belongs to the PREY family.

It localises to the mitochondrion. Functionally, in mitochondria, S-adenosylmethionine-dependent methyltransferase chaperone that supports both coenzyme Q biosynthesis and NADH:ubiquinone oxidoreductase complex (complex I, MT-ND1) assembly. The chain is Protein preY, mitochondrial (pyurf) from Xenopus tropicalis (Western clawed frog).